A 68-amino-acid chain; its full sequence is DNA-directed RNA polymerase subunit omega (68 aa).

This sequence belongs to the RNA polymerase subunit omega family. The RNAP catalytic core consists of 2 alpha, 1 beta, 1 beta' and 1 omega subunit. When a sigma factor is associated with the core the holoenzyme is formed, which can initiate transcription.

The enzyme catalyses RNA(n) + a ribonucleoside 5'-triphosphate = RNA(n+1) + diphosphate. Functionally, promotes RNA polymerase assembly. Latches the N- and C-terminal regions of the beta' subunit thereby facilitating its interaction with the beta and alpha subunits. In Persephonella marina (strain DSM 14350 / EX-H1), this protein is DNA-directed RNA polymerase subunit omega.